Reading from the N-terminus, the 367-residue chain is MTALQNDTFLRALRRQPTEYTPLWLMRQAGRYLPEYNATRARAGSFLGLAKNPAYATEVTLQPLDRYPLDAAILFSDILTVPDAMGLGLSFAQGEGPRFAHPLRTEADVAKLAVPDMASLQYVFDAVSEIRKALVQDGRQRVPLIGFSGSPWTLACYMVEGGGSDDFRTVKAMMYARPDLMHRILDINATAVSAYLNAQIEAGAQAVMVFDTWGGALADGMYQAFSLAYMRKVLQGLKREHDGQQIPVIVFTKGGGIWLEEIAGIGPDAIGLDWTVNLAKARRRTEGRVALQGNIDPTVLFASESAIREQVRGVLDSYASAGGSDGHVFNLGHGISQFTPPENVSVLVDEVHNHSRKLRAGQVAAAV.

Substrate-binding positions include 27 to 31, D77, Y157, T212, and H333; that span reads RQAGR.

It belongs to the uroporphyrinogen decarboxylase family. In terms of assembly, homodimer.

It is found in the cytoplasm. The catalysed reaction is uroporphyrinogen III + 4 H(+) = coproporphyrinogen III + 4 CO2. It functions in the pathway porphyrin-containing compound metabolism; protoporphyrin-IX biosynthesis; coproporphyrinogen-III from 5-aminolevulinate: step 4/4. Functionally, catalyzes the decarboxylation of four acetate groups of uroporphyrinogen-III to yield coproporphyrinogen-III. This is Uroporphyrinogen decarboxylase from Cupriavidus metallidurans (strain ATCC 43123 / DSM 2839 / NBRC 102507 / CH34) (Ralstonia metallidurans).